A 278-amino-acid chain; its full sequence is Digeranylgeranylglyceryl phosphate synthase (278 aa).

8 helical membrane passes run 12–32 (LKNC…ASYF), 34–54 (LAMV…CGFG), 92–112 (LVVM…MAVL), 129–149 (IIGN…GGIA), 153–173 (IDVT…REII), 204–224 (FLLI…FFGI), 226–246 (YMIS…KLVF), and 257–277 (SRNI…GSLF).

It belongs to the UbiA prenyltransferase family. DGGGP synthase subfamily. The cofactor is Mg(2+).

It is found in the cell membrane. It catalyses the reaction sn-3-O-(geranylgeranyl)glycerol 1-phosphate + (2E,6E,10E)-geranylgeranyl diphosphate = 2,3-bis-O-(geranylgeranyl)-sn-glycerol 1-phosphate + diphosphate. Its pathway is membrane lipid metabolism; glycerophospholipid metabolism. Its function is as follows. Prenyltransferase that catalyzes the transfer of the geranylgeranyl moiety of geranylgeranyl diphosphate (GGPP) to the C2 hydroxyl of (S)-3-O-geranylgeranylglyceryl phosphate (GGGP). This reaction is the second ether-bond-formation step in the biosynthesis of archaeal membrane lipids. The chain is Digeranylgeranylglyceryl phosphate synthase from Methanococcus maripaludis (strain DSM 14266 / JCM 13030 / NBRC 101832 / S2 / LL).